Consider the following 379-residue polypeptide: Methionine aminopeptidase 1 (379 aa).

The C6H2-type zinc-finger motif lies at 7–60 (KHICCGIDCNNEADRLQCPKCLNDGVKSYFCGQECFRNSWNIHKHLHRPPNVEK). Zn(2+)-binding residues include Cys-10, Cys-15, Cys-24, Cys-27, Cys-37, Cys-41, His-49, and His-53. A protein is bound at residue His-192. Asp-209, Asp-220, and His-289 together coordinate Zn(2+). A protein is bound at residue His-296. Glu-322 and Glu-353 together coordinate Zn(2+). Ser-373 carries the phosphoserine modification.

This sequence belongs to the peptidase M24A family. Methionine aminopeptidase type 1 subfamily. In terms of assembly, associates with the 60S ribosomal subunit of the 80S translational complex. Zn(2+) serves as cofactor. The cofactor is Co(2+). Mn(2+) is required as a cofactor. It depends on Fe(2+) as a cofactor.

It is found in the cytoplasm. The protein resides in the nucleus. Its subcellular location is the nucleolus. It catalyses the reaction Release of N-terminal amino acids, preferentially methionine, from peptides and arylamides.. Functionally, cotranslationally removes the N-terminal methionine from nascent proteins. The N-terminal methionine is often cleaved when the second residue in the primary sequence is small and uncharged (Met-Ala-, Cys, Gly, Pro, Ser, Thr, or Val). This is Methionine aminopeptidase 1 (fma1) from Schizosaccharomyces pombe (strain 972 / ATCC 24843) (Fission yeast).